A 331-amino-acid chain; its full sequence is L-lactate dehydrogenase A chain (331 aa).

NAD(+) is bound by residues 29 to 57 and Arg-98; that span reads GMVGMASAISILLKDLCDELAMVDVMEDK. 3 residues coordinate substrate: Arg-105, Asn-137, and Arg-168. NAD(+) is bound at residue Asn-137. The active-site Proton acceptor is His-192. Thr-247 lines the substrate pocket.

It belongs to the LDH/MDH superfamily. LDH family. In terms of assembly, homotetramer.

The protein resides in the cytoplasm. It catalyses the reaction (S)-lactate + NAD(+) = pyruvate + NADH + H(+). Its pathway is fermentation; pyruvate fermentation to lactate; (S)-lactate from pyruvate: step 1/1. Interconverts simultaneously and stereospecifically pyruvate and lactate with concomitant interconversion of NADH and NAD(+). The chain is L-lactate dehydrogenase A chain (ldha) from Dissostichus mawsoni (Antarctic cod).